The primary structure comprises 61 residues: Small ribosomal subunit protein uS14 (61 aa).

Residues Cys-24, Cys-27, Cys-40, and Cys-43 each coordinate Zn(2+).

Belongs to the universal ribosomal protein uS14 family. Zinc-binding uS14 subfamily. As to quaternary structure, part of the 30S ribosomal subunit. Contacts proteins S3 and S10. Zn(2+) is required as a cofactor.

Its function is as follows. Binds 16S rRNA, required for the assembly of 30S particles and may also be responsible for determining the conformation of the 16S rRNA at the A site. The sequence is that of Small ribosomal subunit protein uS14 from Acidothermus cellulolyticus (strain ATCC 43068 / DSM 8971 / 11B).